Reading from the N-terminus, the 572-residue chain is Urease subunit alpha (572 aa).

The Urease domain maps to 134 to 572; the sequence is GGIDAHVHFI…LPMAQRYFLF (439 aa). Ni(2+) is bound by residues H139, H141, and K222. N6-carboxylysine is present on K222. H224 is a binding site for substrate. Ni(2+)-binding residues include H251 and H277. H325 serves as the catalytic Proton donor. Residue D365 coordinates Ni(2+).

The protein belongs to the metallo-dependent hydrolases superfamily. Urease alpha subunit family. Heterotrimer of UreA (gamma), UreB (beta) and UreC (alpha) subunits. Three heterotrimers associate to form the active enzyme. The cofactor is Ni cation. In terms of processing, carboxylation allows a single lysine to coordinate two nickel ions.

The protein resides in the cytoplasm. It catalyses the reaction urea + 2 H2O + H(+) = hydrogencarbonate + 2 NH4(+). It functions in the pathway nitrogen metabolism; urea degradation; CO(2) and NH(3) from urea (urease route): step 1/1. The protein is Urease subunit alpha of Synechococcus sp. (strain JA-2-3B'a(2-13)) (Cyanobacteria bacterium Yellowstone B-Prime).